A 953-amino-acid polypeptide reads, in one-letter code: Translation initiation factor IF-2 (953 aa).

Disordered stretches follow at residues S48–A248 and T279–K363. Composition is skewed to basic and acidic residues over residues T80–Q89, F98–A111, and Q140–K188. Positions R191–S207 are enriched in polar residues. Over residues R229–A248 the composition is skewed to basic and acidic residues. Residues K282–T291 show a composition bias toward polar residues. The span at A300–K317 shows a compositional bias: basic and acidic residues. Residues S322–N338 show a composition bias toward low complexity. Positions K339–N348 are enriched in basic residues. Residues E454–K623 form the tr-type G domain. The G1 stretch occupies residues G463–T470. G463–T470 contributes to the GTP binding site. The interval G488 to H492 is G2. Residues D509–G512 form a G3 region. GTP is bound by residues D509–H513 and N563–D566. The G4 stretch occupies residues N563–D566. The G5 stretch occupies residues S599–K601.

The protein belongs to the TRAFAC class translation factor GTPase superfamily. Classic translation factor GTPase family. IF-2 subfamily.

It localises to the cytoplasm. Functionally, one of the essential components for the initiation of protein synthesis. Protects formylmethionyl-tRNA from spontaneous hydrolysis and promotes its binding to the 30S ribosomal subunits. Also involved in the hydrolysis of GTP during the formation of the 70S ribosomal complex. This Streptococcus pyogenes serotype M18 (strain MGAS8232) protein is Translation initiation factor IF-2.